The sequence spans 227 residues: GTPase ERas (227 aa).

The span at 1–19 shows a compositional bias: polar residues; it reads MALPTKSSILDLSSGTPCT. The tract at residues 1 to 25 is disordered; the sequence is MALPTKSSILDLSSGTPCTRSPEES. Residue 48 to 55 coordinates GTP; it reads GASGVGKS. Residues 70–78 carry the Effector region motif; that stretch reads HDPTIQDSY. Residues 95–99 and 151–154 each bind GTP; these read DTSGQ and NKCD. 2 S-palmitoyl cysteine lipidation sites follow: Cys220 and Cys222. Cys224 carries the post-translational modification Cysteine methyl ester. Cys224 carries S-farnesyl cysteine lipidation. A propeptide spans 225–227 (removed in mature form); it reads SVA.

It belongs to the small GTPase superfamily. Ras family. As to quaternary structure, interacts with PIK3CD. In terms of tissue distribution, expressed in several undifferentiated mouse embryonic stem cell lines.

Its subcellular location is the cell membrane. The catalysed reaction is GTP + H2O = GDP + phosphate + H(+). Its activity is regulated as follows. Alternates between an inactive form bound to GDP and an active form bound to GTP. Activated by a guanine nucleotide-exchange factor (GEF) and inactivated by a GTPase-activating protein (GAP). Its function is as follows. Ras proteins bind GDP/GTP and possess intrinsic GTPase activity. Plays an important role in the tumor-like growth properties of embryonic stem cells. The chain is GTPase ERas (Eras) from Mus musculus (Mouse).